The sequence spans 398 residues: Tryptophan synthase beta chain (398 aa).

Lysine 88 bears the N6-(pyridoxal phosphate)lysine mark.

This sequence belongs to the TrpB family. Tetramer of two alpha and two beta chains. Requires pyridoxal 5'-phosphate as cofactor.

It catalyses the reaction (1S,2R)-1-C-(indol-3-yl)glycerol 3-phosphate + L-serine = D-glyceraldehyde 3-phosphate + L-tryptophan + H2O. It participates in amino-acid biosynthesis; L-tryptophan biosynthesis; L-tryptophan from chorismate: step 5/5. The beta subunit is responsible for the synthesis of L-tryptophan from indole and L-serine. The sequence is that of Tryptophan synthase beta chain from Haemophilus influenzae (strain PittGG).